We begin with the raw amino-acid sequence, 57 residues long: Ribosome modulation factor 1 (57 aa).

Positions 1–14 (MKRQKRDRQSRAHT) are enriched in basic residues. A disordered region spans residues 1–24 (MKRQKRDRQSRAHTRGYQAGISGR).

It belongs to the ribosome modulation factor family.

It localises to the cytoplasm. During stationary phase, converts 70S ribosomes to an inactive dimeric form (100S ribosomes). The sequence is that of Ribosome modulation factor 1 from Colwellia psychrerythraea (strain 34H / ATCC BAA-681) (Vibrio psychroerythus).